The sequence spans 180 residues: LDLR chaperone boca (180 aa).

The signal sequence occupies residues 1–18; sequence MQTRLVLLLLALTPLVLA. Over residues 48 to 61 the composition is skewed to acidic residues; the sequence is QWEEDEEPLEDDEL. Positions 48-78 are disordered; it reads QWEEDEEPLEDDELPEHLRPQPKLDLSNLDS. The structured core stretch occupies residues 93 to 166; it reads TLMTFVSVTG…QERCKGVTIE (74 aa). Positions 177 to 180 match the Prevents secretion from ER motif; sequence KDEL.

This sequence belongs to the MESD family. Monomer. Interacts with Arrow and Yolkless.

It is found in the endoplasmic reticulum. Functionally, chaperone specifically assisting the folding of beta-propeller/EGF modules within the family of low-density lipoprotein receptors (LDLRs). Acts as a modulator of the Wg pathway, since some LDLRs are coreceptors for the canonical Wnt pathway. The polypeptide is LDLR chaperone boca (boca) (Drosophila melanogaster (Fruit fly)).